The following is a 115-amino-acid chain: UPF0102 protein NMCC_2054 (115 aa).

It belongs to the UPF0102 family.

The chain is UPF0102 protein NMCC_2054 from Neisseria meningitidis serogroup C (strain 053442).